A 361-amino-acid polypeptide reads, in one-letter code: uncharacterized protein (361 aa).

Threonine 12 is modified (phosphothreonine).

Its subcellular location is the cytoplasm. It is found in the nucleus. This is an uncharacterized protein from Schizosaccharomyces pombe (strain 972 / ATCC 24843) (Fission yeast).